Consider the following 387-residue polypeptide: tRNA pseudouridine synthase B (387 aa).

Aspartate 43 (nucleophile) is an active-site residue.

The protein belongs to the pseudouridine synthase TruB family. Type 1 subfamily.

The catalysed reaction is uridine(55) in tRNA = pseudouridine(55) in tRNA. In terms of biological role, responsible for synthesis of pseudouridine from uracil-55 in the psi GC loop of transfer RNAs. The protein is tRNA pseudouridine synthase B of Bifidobacterium longum (strain NCC 2705).